Here is a 168-residue protein sequence, read N- to C-terminus: Chorismate pyruvate-lyase (168 aa).

Residues Met36, Arg78, Leu116, and Glu157 each contribute to the substrate site.

It belongs to the UbiC family. As to quaternary structure, monomer.

Its subcellular location is the cytoplasm. It catalyses the reaction chorismate = 4-hydroxybenzoate + pyruvate. It functions in the pathway cofactor biosynthesis; ubiquinone biosynthesis. Functionally, removes the pyruvyl group from chorismate, with concomitant aromatization of the ring, to provide 4-hydroxybenzoate (4HB) for the ubiquinone pathway. This is Chorismate pyruvate-lyase from Photorhabdus laumondii subsp. laumondii (strain DSM 15139 / CIP 105565 / TT01) (Photorhabdus luminescens subsp. laumondii).